Here is a 479-residue protein sequence, read N- to C-terminus: MNRNPDQNTLPNITLKIIETYLGRVPSVNEYHMLKLQARNIQKITVFNKDIFVSLVKKNKKRFFSDVDTSASEIKDRILSYFSKQTQTYNIGKLFTIIELQSVLVTTYTDILGVLTIKAPNVISSKISYNVTSMEELARDMLNSMNVAVIDKAKVMGRHNVSSLVKNVNKLMEEYLRRHNKSCICYGSYSLYLINPNIRYGDIDILQTNSRTFLIDLAFLIKFITGNNIILSKIPYLRNYMVIKDENDNHIIDSFNIRQDTMNVVPKIFIDNIYIVDPTFQLLNMIKMFSQIDRLEDLSKDPEKFNARMATMLEYVRYTHGIVFDGKRNNMPMKCIIDENNRIVTVTTKDYFSFKKCLVYLDENVLSSDILDLNADTSCDFESVTNSVYLIHDNIMYTYFSNTILLSDKGKVHEISARGLCAHILLYQMLTSGEYKQCLSDLLNSMMNRDKIPIYSHTERDKKPGRHGFINIEKDIIVF.

Active-site residues include Asp202 and Asp204. Positions 202, 204, and 253 each coordinate Ca(2+).

It belongs to the poxviridae poly(A) polymerase catalytic subunit family. In terms of assembly, heterodimer of a large (catalytic) subunit and a small (regulatory) subunit.

It carries out the reaction RNA(n) + ATP = RNA(n)-3'-adenine ribonucleotide + diphosphate. Polymerase that creates the 3'-poly(A) tail of mRNA's. In Cowpox virus (strain GRI-90 / Grishak) (CPV), this protein is Poly(A) polymerase catalytic subunit (OPG063).